Here is a 473-residue protein sequence, read N- to C-terminus: Siroheme synthase (473 aa).

Residues 1–203 (MTLFPIFADL…QQPGLAEQEL (203 aa)) form a precorrin-2 dehydrogenase /sirohydrochlorin ferrochelatase region. NAD(+) contacts are provided by residues 22 to 23 (AV) and 43 to 44 (PR). S128 is subject to Phosphoserine. Positions 216-473 (GSVVLVGAGP…GLPGPQALAA (258 aa)) are uroporphyrinogen-III C-methyltransferase. P225 serves as a coordination point for S-adenosyl-L-methionine. D248 serves as the catalytic Proton acceptor. K270 functions as the Proton donor in the catalytic mechanism. Residues 302–304 (GGD), I307, 332–333 (TA), M384, and G413 each bind S-adenosyl-L-methionine.

It in the N-terminal section; belongs to the precorrin-2 dehydrogenase / sirohydrochlorin ferrochelatase family. The protein in the C-terminal section; belongs to the precorrin methyltransferase family.

The enzyme catalyses uroporphyrinogen III + 2 S-adenosyl-L-methionine = precorrin-2 + 2 S-adenosyl-L-homocysteine + H(+). The catalysed reaction is precorrin-2 + NAD(+) = sirohydrochlorin + NADH + 2 H(+). It carries out the reaction siroheme + 2 H(+) = sirohydrochlorin + Fe(2+). Its pathway is cofactor biosynthesis; adenosylcobalamin biosynthesis; precorrin-2 from uroporphyrinogen III: step 1/1. It functions in the pathway cofactor biosynthesis; adenosylcobalamin biosynthesis; sirohydrochlorin from precorrin-2: step 1/1. The protein operates within porphyrin-containing compound metabolism; siroheme biosynthesis; precorrin-2 from uroporphyrinogen III: step 1/1. It participates in porphyrin-containing compound metabolism; siroheme biosynthesis; siroheme from sirohydrochlorin: step 1/1. Its pathway is porphyrin-containing compound metabolism; siroheme biosynthesis; sirohydrochlorin from precorrin-2: step 1/1. Its function is as follows. Multifunctional enzyme that catalyzes the SAM-dependent methylations of uroporphyrinogen III at position C-2 and C-7 to form precorrin-2 via precorrin-1. Then it catalyzes the NAD-dependent ring dehydrogenation of precorrin-2 to yield sirohydrochlorin. Finally, it catalyzes the ferrochelation of sirohydrochlorin to yield siroheme. This Bordetella pertussis (strain Tohama I / ATCC BAA-589 / NCTC 13251) protein is Siroheme synthase.